The primary structure comprises 377 residues: tRNA-specific 2-thiouridylase MnmA (377 aa).

Residues 8–15 and M34 each bind ATP; that span reads GMSGGVDS. The interaction with target base in tRNA stretch occupies residues 94–96; that stretch reads NPD. C99 serves as the catalytic Nucleophile. C99 and C201 are disulfide-bonded. Residue G123 participates in ATP binding. The tract at residues 151–153 is interaction with tRNA; that stretch reads KDQ. Residue C201 is the Cysteine persulfide intermediate of the active site. Residues 315–316 form an interaction with tRNA region; that stretch reads RY.

It belongs to the MnmA/TRMU family.

The protein resides in the cytoplasm. The catalysed reaction is S-sulfanyl-L-cysteinyl-[protein] + uridine(34) in tRNA + AH2 + ATP = 2-thiouridine(34) in tRNA + L-cysteinyl-[protein] + A + AMP + diphosphate + H(+). Its function is as follows. Catalyzes the 2-thiolation of uridine at the wobble position (U34) of tRNA, leading to the formation of s(2)U34. The protein is tRNA-specific 2-thiouridylase MnmA of Acinetobacter baumannii (strain ACICU).